Reading from the N-terminus, the 397-residue chain is uncharacterized protein (397 aa).

The next 9 helical transmembrane spans lie at 1–21 (MGASGLVWTLTIVLIAGLMLV), 39–59 (VIQSATFVGIAILFGIAVVVF), 76–96 (EALSVDNLFVFLVIISSFGVP), 103–123 (VLLFGIAFALVTRTGFIFVGA), 124–144 (ALIENFNSAFYLFGLVLLVMA), 194–214 (MMTPLLLVMIAVGGTDILFAF), 219–239 (ALFGLTQNVYLVFAATAFSLL), 255–275 (LVYLSYGLAVILGFIGVKLML), and 301–321 (QSLTVIIIVLLITTAASFWSA).

This sequence belongs to the TerC family.

The protein resides in the cell membrane. This is an uncharacterized protein from Mycobacterium bovis (strain ATCC BAA-935 / AF2122/97).